We begin with the raw amino-acid sequence, 487 residues long: uncharacterized protein (487 aa).

This is an uncharacterized protein from Bacillus subtilis (strain 168).